Consider the following 152-residue polypeptide: Kininogen-1c (152 aa).

The N-terminal stretch at 1-23 (MRLWFCLSLFIVLCLEHFPGTLA) is a signal peptide. Basic and acidic residues predominate over residues 28 to 44 (VPESEEKTEQFLRDLPK). Positions 28–152 (VPESEEKTEQ…RGKFHSQSHV (125 aa)) are disordered.

This sequence belongs to the bradykinin-related peptide family. Expressed by the skin glands.

It is found in the secreted. Potent vasodilator. Binds B1 (BDKRB1) and B2 (BDKRB2) bradykinin receptors. The chain is Kininogen-1c from Bombina maxima (Giant fire-bellied toad).